The chain runs to 194 residues: High mobility group protein B4 (194 aa).

2 consecutive DNA-binding regions (HMG box) follow at residues 9–79 and 93–161; these read PKAN…MNYF and PRRP…SVYR.

The protein belongs to the HMGB family.

Its subcellular location is the nucleus. It is found in the chromosome. The protein is High mobility group protein B4 (HMGB4) of Bos taurus (Bovine).